The following is a 758-amino-acid chain: Vitamin K-dependent gamma-carboxylase (758 aa).

A disordered region spans residues 1-29 (MAVHRGSARAAPASDKVQKNKPAQTSGLE). Residue A2 is modified to N-acetylalanine. At 2-60 (AVHRGSARAAPASDKVQKNKPAQTSGLEQGSRMARIFGFEWADLSSWQSVVTLLNRPTD) the chain is on the cytoplasmic side. A helical transmembrane segment spans residues 61–81 (PANLAVFRFLFAFLMLLDIPQ). At 82–113 (ERGLSSLDRKYLDGLDVCRFPLLDALRPLPLD) the chain is on the lumenal side. An intrachain disulfide couples C99 to C450. A helical transmembrane segment spans residues 114–134 (WMYLVYTIMFLGALGMMLGLW). Residues 135–136 (YR) are Cytoplasmic-facing. A helical transmembrane segment spans residues 137–157 (LSCMLFLLPYWYVFLLDKTSW). Residues 158–292 (NNHSYLYGLL…VSYFHCMNSQ (135 aa)) are Lumenal-facing. A helical transmembrane segment spans residues 293–313 (LFSIGMFPYVMLASSPLFCSA). The Cytoplasmic segment spans residues 314–361 (EWPRKLVARCPKRLQELLPAKAAPRPSASCVYKRARAKAGQKPGLRHH). The chain crosses the membrane as a helical span at residues 362-382 (LGTVFTLLYLLEQLFLPYSHF). Residues 383 to 758 (LTQGYNNWTN…PDSEHVHSEL (376 aa)) lie on the Lumenal side of the membrane. The interval 727–758 (PFEPVDESSASNTDSSDPHPSEPDSEHVHSEL) is disordered. The segment covering 742–758 (SDPHPSEPDSEHVHSEL) has biased composition (basic and acidic residues).

It belongs to the vitamin K-dependent gamma-carboxylase family. Monomer. Interacts with CALU.

Its subcellular location is the endoplasmic reticulum membrane. It catalyses the reaction 4-carboxy-L-glutamyl-[protein] + 2,3-epoxyphylloquinone + H2O + H(+) = phylloquinol + L-glutamyl-[protein] + CO2 + O2. Functionally, mediates the vitamin K-dependent carboxylation of glutamate residues to calcium-binding gamma-carboxyglutamate (Gla) residues with the concomitant conversion of the reduced hydroquinone form of vitamin K to vitamin K epoxide. Catalyzes gamma-carboxylation of various proteins, such as blood coagulation factors (F2, F7, F9 and F10), osteocalcin (BGLAP) or matrix Gla protein (MGP). This chain is Vitamin K-dependent gamma-carboxylase (Ggcx), found in Rattus norvegicus (Rat).